Here is a 268-residue protein sequence, read N- to C-terminus: Expansin-B3 (268 aa).

An N-terminal signal peptide occupies residues 1-25 (MAFSISKKAAVAALFSFLVVTCVAG). The N-linked (GlcNAc...) asparagine glycan is linked to N30. Residues 62 to 168 (GGACGFKNTN…KRVPCNFPGL (107 aa)) form the Expansin-like EG45 domain. Intrachain disulfides connect C65/C93, C96/C163, and C101/C107. Positions 181–262 (VYFAVLVEYE…NWAPMAVYRS (82 aa)) constitute an Expansin-like CBD domain. N-linked (GlcNAc...) asparagine glycosylation is present at N238.

The protein belongs to the expansin family. Expansin B subfamily. Expressed in roots, coleoptiles and internodes.

The protein resides in the secreted. It localises to the cell wall. The protein localises to the membrane. Its function is as follows. May cause loosening and extension of plant cell walls by disrupting non-covalent bonding between cellulose microfibrils and matrix glucans. No enzymatic activity has been found. May be required for rapid internodal elongation in deepwater rice during submergence. The sequence is that of Expansin-B3 (EXPB3) from Oryza sativa subsp. japonica (Rice).